A 287-amino-acid chain; its full sequence is Cyclopropane mycolic acid synthase MmaA2 (287 aa).

S-adenosyl-L-methionine is bound by residues 33-34, 72-74, 94-99, 123-124, and Ile-136; these read YS, GCG, TLSKNQ, and WE. Residue Cys-269 is part of the active site.

Belongs to the CFA/CMAS family.

The enzyme catalyses a 1-acyl-2-(9Z)-enoyl-sn-glycero-3-phospholipid + S-adenosyl-L-methionine = a 1-acyl-2-(9-cyclopronane)-acyl-sn-glycero-3-phospholipid + S-adenosyl-L-homocysteine + H(+). It participates in lipid metabolism; mycolic acid biosynthesis. Functionally, catalyzes the conversion of a double bond to a cis cyclopropane ring at the distal position of an alpha mycolic acid via the transfer of a methylene group from S-adenosyl-L-methionine. MmaA2 also catalyzes the biosynthesis of the cis-cyclopropanated methoxymycolates. Cyclopropanated mycolic acids are key factors participating in cell envelope permeability, host immunomodulation and persistence. This chain is Cyclopropane mycolic acid synthase MmaA2 (mmaA2), found in Mycobacterium tuberculosis (strain ATCC 25177 / H37Ra).